The following is a 643-amino-acid chain: Phosphatidylinositol-3,5-bisphosphate 3-phosphatase MTMR2 (643 aa).

Residues 1 to 52 (MEKSSSCESLGAQLPAARLPSEDSLSSASTSHSENSVHTKSASAISSDSIST) are disordered. Residues Ser6 and Ser9 each carry the phosphoserine modification. The segment covering 23 to 40 (DSLSSASTSHSENSVHTK) has biased composition (polar residues). Residues 41–52 (SASAISSDSIST) are compositionally biased toward low complexity. The residue at position 58 (Ser58) is a Phosphoserine. In terms of domain architecture, GRAM spans 68 to 139 (NKLAEMEEPA…GVISRVEKIG (72 aa)). A Myotubularin phosphatase domain is found at 205-580 (GWKLYDPLLE…RHLELWVGYY (376 aa)). Positions 330, 355, and 356 each coordinate a 1,2-diacyl-sn-glycero-3-phospho-(1D-myo-inositol-3,5-bisphosphate). Residues Asn330, Asn355, and Ile356 each coordinate a 1,2-diacyl-sn-glycero-3-phospho-(1D-myo-inositol-3-phosphate). Residue Cys417 is the Phosphocysteine intermediate of the active site. A 1,2-diacyl-sn-glycero-3-phospho-(1D-myo-inositol-3,5-bisphosphate) is bound by residues Ser418, Asp419, Gly420, Trp421, Asp422, Arg423, Arg459, and Arg463. 6 residues coordinate a 1,2-diacyl-sn-glycero-3-phospho-(1D-myo-inositol-3-phosphate): Ser418, Asp419, Gly420, Trp421, Asp422, and Arg423. A 1,2-diacyl-sn-glycero-3-phospho-(1D-myo-inositol-3-phosphate) is bound at residue Arg463. The stretch at 593–627 (IHSRYKELLAKRAELQRKVEELQREISNRSTSSSE) forms a coiled coil. A disordered region spans residues 614–643 (LQREISNRSTSSSERASSPAQCVTPVQTVV). A compositionally biased stretch (low complexity) spans 620–631 (NRSTSSSERASS). Residues 632-643 (PAQCVTPVQTVV) show a composition bias toward polar residues.

It belongs to the protein-tyrosine phosphatase family. Non-receptor class myotubularin subfamily. Homodimer (via coiled-coil domain). Heterotetramer consisting of one MTMR2 dimer and one SBF2/MTMR13 dimer; specifically in peripheral nerves stabilizes SBF2/MTMR13 at the membranes and increases MTMR2 catalytic activity towards phosphatidylinositol 3,5-bisphosphate and to a lesser extent towards phosphatidylinositol 3-phosphate. Heterodimer with SBF1/MTMR5; acts as an adapter for the phosphatase MTMR2 to regulate MTMR2 catalytic activity and subcellular location. Heterodimer with MTMR12. In terms of processing, phosphorylation at Ser-58 decreases MTMR2 localization to endocytic vesicular structures. As to expression, expressed in sciatic nerve and in Schwann cells (at protein level). Detected in adult dorsal root ganglia, neurons of the central nervous system, motor neurons, cell soma and neurites of sensory neurons, olfactory bulb, cerebellum and hippocampus.

It is found in the cytoplasm. The protein localises to the early endosome membrane. The protein resides in the perinuclear region. Its subcellular location is the cell projection. It localises to the axon. It is found in the endosome membrane. It catalyses the reaction a 1,2-diacyl-sn-glycero-3-phospho-(1D-myo-inositol-3,5-bisphosphate) + H2O = a 1,2-diacyl-sn-glycero-3-phospho-(1D-myo-inositol-5-phosphate) + phosphate. The enzyme catalyses a 1,2-diacyl-sn-glycero-3-phospho-(1D-myo-inositol-3-phosphate) + H2O = a 1,2-diacyl-sn-glycero-3-phospho-(1D-myo-inositol) + phosphate. It carries out the reaction 1,2-dioctanoyl-sn-glycero-3-phospho-(1-D-myo-inositol-3-phosphate) + H2O = 1,2-dioctanoyl-sn-glycero-3-phospho-(1D-myo-inositol) + phosphate. The catalysed reaction is 1,2-dioctanoyl-sn-glycero-3-phospho-(1D-myo-inositol-3,5-bisphosphate) + H2O = 1,2-dioctanoyl-sn-glycero-3-phospho-(1D-myo-inositol-5-phosphate) + phosphate. Functionally, lipid phosphatase that specifically dephosphorylates the D-3 position of phosphatidylinositol 3-phosphate and phosphatidylinositol 3,5-bisphosphate, generating phosphatidylinositol and phosphatidylinositol 5-phosphate. Regulates the level of these phosphoinositides critical for various biological processes including autophagy initiation and autophagosome maturation. The polypeptide is Phosphatidylinositol-3,5-bisphosphate 3-phosphatase MTMR2 (Mus musculus (Mouse)).